Here is a 316-residue protein sequence, read N- to C-terminus: Olfactory receptor 52A5 (316 aa).

Residues 1-27 (MPTFNGSVFMPSAFILIGIPGLESVQC) are Extracellular-facing. The N-linked (GlcNAc...) asparagine glycan is linked to Asn-5. Residues 28-48 (WIGIPFSAMYLIGVIGNSLIL) form a helical membrane-spanning segment. The Cytoplasmic segment spans residues 49–56 (VIIKYENS). A helical membrane pass occupies residues 57 to 77 (LHIPMYIFLAMLAATDIALNT). The Extracellular portion of the chain corresponds to 78–101 (CILPKMLGIFWFHLPEISFDACLF). Residues 102 to 122 (QMWLIHSFQAIESGILLAMAL) form a helical membrane-spanning segment. The Cytoplasmic segment spans residues 123 to 141 (DRYVAICIPLRHATIFSQQ). Residues 142-162 (FLTHIGLGVTLRAAILIIPSL) traverse the membrane as a helical segment. At 163 to 199 (GLIKCCLKHYRTTVISHSYCEHMAIVKLATEDIRVNK) the chain is on the extracellular side. The chain crosses the membrane as a helical span at residues 200–220 (IYGLFVAFAILGFDIIFITLS). Residues 221–240 (YVQIFITVFQLPQKEARFKA) are Cytoplasmic-facing. Residues 241 to 261 (FNTCIAHICVFLQFYLLAFFS) form a helical membrane-spanning segment. The Extracellular segment spans residues 262–276 (FFTHRFGSHIPPYIH). Residues 277 to 297 (ILLSNLYLLVPPFLNPIVYGV) form a helical membrane-spanning segment. The Cytoplasmic segment spans residues 298-316 (KTKQIRDHIVKVFFFKKVT).

It belongs to the G-protein coupled receptor 1 family.

The protein resides in the cell membrane. Functionally, odorant receptor. In Homo sapiens (Human), this protein is Olfactory receptor 52A5 (OR52A5).